We begin with the raw amino-acid sequence, 247 residues long: 6-phosphogluconolactonase (247 aa).

This sequence belongs to the glucosamine/galactosamine-6-phosphate isomerase family. 6-phosphogluconolactonase subfamily.

The catalysed reaction is 6-phospho-D-glucono-1,5-lactone + H2O = 6-phospho-D-gluconate + H(+). The protein operates within carbohydrate degradation; pentose phosphate pathway; D-ribulose 5-phosphate from D-glucose 6-phosphate (oxidative stage): step 2/3. Functionally, hydrolysis of 6-phosphogluconolactone to 6-phosphogluconate. The polypeptide is 6-phosphogluconolactonase (pgl) (Mycobacterium leprae (strain TN)).